The chain runs to 138 residues: Basic phospholipase A2 trimucrotoxin (138 aa).

The first 16 residues, 1–16 (MRTLWIVAVLLLGVEG), serve as a signal peptide directing secretion. Disulfide bonds link C42–C131, C44–C60, C59–C111, C65–C138, C66–C104, C73–C97, and C91–C102. Ca(2+)-binding residues include Y43, G45, and G47. H63 is an active-site residue. D64 is a Ca(2+) binding site. Residue D105 is part of the active site.

Belongs to the phospholipase A2 family. Group II subfamily. D49 sub-subfamily. As to quaternary structure, homodimer. Ca(2+) serves as cofactor. As to expression, expressed by the venom gland.

Its subcellular location is the secreted. The catalysed reaction is a 1,2-diacyl-sn-glycero-3-phosphocholine + H2O = a 1-acyl-sn-glycero-3-phosphocholine + a fatty acid + H(+). Snake venom phospholipase A2 (PLA2) that displays edema-inducing activities, as well as presynaptic neurotoxicity and low myotoxicity. PLA2 catalyzes the calcium-dependent hydrolysis of the 2-acyl groups in 3-sn-phosphoglycerides. This Protobothrops mucrosquamatus (Taiwan habu) protein is Basic phospholipase A2 trimucrotoxin.